The primary structure comprises 776 residues: Protein FAM83C (776 aa).

A DUF1669 region spans residues 1 to 340 (MQGCQAGASI…LYAESQPVEG (340 aa)). Disordered stretches follow at residues 344 to 467 (NEDP…STSP), 494 to 565 (SRLP…SLQH), 617 to 653 (HGQL…DDRR), 669 to 694 (PFRS…VGSA), and 716 to 745 (QGAR…LFAP). Low complexity predominate over residues 368–385 (SATGSSPSSNSLSSIKHS). Residues 452–467 (PWSQSSPALNHSSTSP) show a composition bias toward polar residues. Over residues 523 to 539 (VEEKKVSLSQSHDHLDR) the composition is skewed to basic and acidic residues. The segment covering 554-563 (SRVTPDSSSL) has biased composition (polar residues).

This sequence belongs to the FAM83 family. As to quaternary structure, directly interacts (via DUF1669) with CSNK1A1 and CSNK1A1L. May interact with RAF1. Phosphorylated by CSNK1A1.

The protein resides in the cytoplasm. Functionally, may play a role in MAPK signaling. In Mus musculus (Mouse), this protein is Protein FAM83C.